The primary structure comprises 154 residues: UPF0178 protein in pahZ1 5'region (154 aa).

Belongs to the UPF0178 family.

This chain is UPF0178 protein in pahZ1 5'region, found in Paucimonas lemoignei (Pseudomonas lemoignei).